A 390-amino-acid chain; its full sequence is Transforming growth factor beta-1 proprotein (390 aa).

The first 29 residues, 1-29 (MPPSGLRLLPLLLPLLWLLMLTPGRPVAG), serve as a signal peptide directing secretion. Positions 30–74 (LSTCKTIDMELVKRKGIEAIRGQILSKLRLASPPSQGDVPPGPLP) are straightjacket domain. The tract at residues 75–271 (EAILALYNST…ATPLERAQHL (197 aa)) is arm domain. Residues asparagine 82, asparagine 136, and asparagine 176 are each glycosylated (N-linked (GlcNAc...) asparagine). Positions 226–252 (DSKDNTLQVDINGFSSGRRGDLATIHG) are bowtie tail. The short motif at 244-246 (RGD) is the Cell attachment site element. 4 disulfide bridges follow: cysteine 285–cysteine 294, cysteine 293–cysteine 356, cysteine 322–cysteine 387, and cysteine 326–cysteine 389.

This sequence belongs to the TGF-beta family. In terms of assembly, homodimer; disulfide-linked. Interacts with the serine proteases, HTRA1 and HTRA3: the interaction with either inhibits TGFB1-mediated signaling and the HTRA protease activity is required for this inhibition. May interact with THSD4; this interaction may lead to sequestration by FBN1 microfibril assembly and attenuation of TGFB signaling. Interacts with CD109, DPT and ASPN. Interacts with EFEMP2. Interacts with TSKU; the interaction contributes to regulation of the hair cycle. Interacts with TGFBR3. As to quaternary structure, homodimer; disulfide-linked. Interacts with transforming growth factor beta-1 (TGF-beta-1) chain; interaction is non-covalent and maintains TGF-beta-1 in a latent state; each latency-associated peptide (LAP) monomer interacts with TGF-beta-1 in the other monomer. Interacts with LTBP1; leading to regulation of TGF-beta-1 activation. Interacts with LRRC32/GARP; leading to regulation of TGF-beta-1 activation on the surface of activated regulatory T-cells (Tregs). Interacts with LRRC33/NRROS; leading to regulation of TGF-beta-1 activation in macrophages and microglia. Interacts (via cell attachment site) with integrins ITGAV and ITGB6 (ITGAV:ITGB6), leading to release of the active TGF-beta-1. Interacts with NREP; the interaction results in a decrease in TGFB1 autoinduction. Interacts with HSP90AB1; inhibits latent TGFB1 activation. Homodimer; disulfide-linked. Interacts with TGF-beta receptors (TGFBR1 and TGFBR2), leading to signal transduction. Post-translationally, transforming growth factor beta-1 proprotein: The precursor proprotein is cleaved in the Golgi apparatus by FURIN to form Transforming growth factor beta-1 (TGF-beta-1) and Latency-associated peptide (LAP) chains, which remain non-covalently linked, rendering TGF-beta-1 inactive. N-glycosylated. Deglycosylation leads to activation of Transforming growth factor beta-1 (TGF-beta-1); mechanisms triggering deglycosylation-driven activation of TGF-beta-1 are however unclear.

It localises to the secreted. Its subcellular location is the extracellular space. The protein localises to the extracellular matrix. Functionally, transforming growth factor beta-1 proprotein: Precursor of the Latency-associated peptide (LAP) and Transforming growth factor beta-1 (TGF-beta-1) chains, which constitute the regulatory and active subunit of TGF-beta-1, respectively. Required to maintain the Transforming growth factor beta-1 (TGF-beta-1) chain in a latent state during storage in extracellular matrix. Associates non-covalently with TGF-beta-1 and regulates its activation via interaction with 'milieu molecules', such as LTBP1, LRRC32/GARP and LRRC33/NRROS, that control activation of TGF-beta-1. Interaction with LRRC33/NRROS regulates activation of TGF-beta-1 in macrophages and microglia. Interaction with LRRC32/GARP controls activation of TGF-beta-1 on the surface of activated regulatory T-cells (Tregs). Interaction with integrins (ITGAV:ITGB6 or ITGAV:ITGB8) results in distortion of the Latency-associated peptide chain and subsequent release of the active TGF-beta-1. In terms of biological role, multifunctional protein that regulates the growth and differentiation of various cell types and is involved in various processes, such as normal development, immune function, microglia function and responses to neurodegeneration. Activation into mature form follows different steps: following cleavage of the proprotein in the Golgi apparatus, Latency-associated peptide (LAP) and Transforming growth factor beta-1 (TGF-beta-1) chains remain non-covalently linked rendering TGF-beta-1 inactive during storage in extracellular matrix. At the same time, LAP chain interacts with 'milieu molecules', such as LTBP1, LRRC32/GARP and LRRC33/NRROS that control activation of TGF-beta-1 and maintain it in a latent state during storage in extracellular milieus. TGF-beta-1 is released from LAP by integrins (ITGAV:ITGB6 or ITGAV:ITGB8): integrin-binding to LAP stabilizes an alternative conformation of the LAP bowtie tail and results in distortion of the LAP chain and subsequent release of the active TGF-beta-1. Once activated following release of LAP, TGF-beta-1 acts by binding to TGF-beta receptors (TGFBR1 and TGFBR2), which transduce signal. While expressed by many cells types, TGF-beta-1 only has a very localized range of action within cell environment thanks to fine regulation of its activation by Latency-associated peptide chain (LAP) and 'milieu molecules'. Plays an important role in bone remodeling: acts as a potent stimulator of osteoblastic bone formation, causing chemotaxis, proliferation and differentiation in committed osteoblasts. Can promote either T-helper 17 cells (Th17) or regulatory T-cells (Treg) lineage differentiation in a concentration-dependent manner. At high concentrations, leads to FOXP3-mediated suppression of RORC and down-regulation of IL-17 expression, favoring Treg cell development. At low concentrations in concert with IL-6 and IL-21, leads to expression of the IL-17 and IL-23 receptors, favoring differentiation to Th17 cells. Stimulates sustained production of collagen through the activation of CREB3L1 by regulated intramembrane proteolysis (RIP). Mediates SMAD2/3 activation by inducing its phosphorylation and subsequent translocation to the nucleus. Positively regulates odontoblastic differentiation in dental papilla cells, via promotion of IPO7-mediated translocation of phosphorylated SMAD2 to the nucleus and subsequent transcription of target genes. Can induce epithelial-to-mesenchymal transition (EMT) and cell migration in various cell types. The sequence is that of Transforming growth factor beta-1 proprotein (TGFB1) from Ovis aries (Sheep).